The sequence spans 1953 residues: TATA-binding protein-associated factor mot1 (1953 aa).

An HEAT 1 repeat occupies 36–74 (PDELYNLLGRVVPYLKSKNWDTRVAAAKAIGGIVENVPV). Residues 79-141 (RTSPVKKEET…KLEEERLSTR (63 aa)) form a disordered region. Residues 98–108 (TEEKPFIKTEE) are compositionally biased toward basic and acidic residues. Residues 113-130 (SSQSQVVVSSNLTSNSEV) show a composition bias toward low complexity. The segment covering 131–141 (SKLEEERLSTR) has biased composition (basic and acidic residues). Ser-144 carries the phosphoserine modification. The segment at 240–278 (DNVGSNSKGSPTTSIPEHKTSINNNKPEDTPTPSENVHL) is disordered. Residues 242 to 276 (VGSNSKGSPTTSIPEHKTSINNNKPEDTPTPSENV) show a composition bias toward polar residues. 4 HEAT repeats span residues 358–396 (VWPF…YAGF), 513–551 (SDYL…KLVQ), 554–592 (LSSC…LCSF), and 608–646 (EFSF…VQTS). Disordered regions lie at residues 730-762 (SGQP…KDDP) and 1078-1103 (DDND…KSSL). HEAT repeat units follow at residues 1191–1229 (QSEI…SNAA) and 1270–1311 (VRIL…LVPL). The Helicase ATP-binding domain maps to 1370–1543 (AFLNKYELHG…WSLFDFLMPG (174 aa)). 1383-1390 (DDMGLGKT) lines the ATP pocket. The DEGH box signature appears at 1494–1497 (DEGH). Residues 1580-1623 (EAIHKQVLPFMLRRLKEDVLADLPPKIIQDYYCDMSDLQRKLLN) form an HEAT 8 repeat. One can recognise a Helicase C-terminal domain in the interval 1725–1877 (GIDSALTNAV…STVVNQQNAG (153 aa)). The interval 1901–1920 (QNIDKEESEDAAGRGLSGTS) is disordered.

Belongs to the SNF2/RAD54 helicase family. Forms a complex with TBP which binds TATA DNA.

It localises to the nucleus. Regulates transcription in association with TATA binding protein (TBP). Removes TBP from the TATA box via its ATPase activity. This is TATA-binding protein-associated factor mot1 from Schizosaccharomyces pombe (strain 972 / ATCC 24843) (Fission yeast).